The sequence spans 142 residues: Large ribosomal subunit protein bL17 (142 aa).

Belongs to the bacterial ribosomal protein bL17 family. In terms of assembly, part of the 50S ribosomal subunit. Contacts protein L32.

This is Large ribosomal subunit protein bL17 from Wolbachia sp. subsp. Brugia malayi (strain TRS).